The chain runs to 1011 residues: Beta-galactosidase A (1011 aa).

The first 19 residues, 1 to 19 (MKLLSSWVVAALAAQAAGA), serve as a signal peptide directing secretion. Substrate is bound by residues tyrosine 96, 140 to 142 (NAE), and asparagine 199. Glutamate 200 acts as the Proton donor in catalysis. 2 cysteine pairs are disulfide-bonded: cysteine 205–cysteine 206 and cysteine 267–cysteine 316. Glutamate 299 acts as the Nucleophile in catalysis. Residue tyrosine 365 participates in substrate binding. N-linked (GlcNAc...) asparagine glycans are attached at residues asparagine 374, asparagine 456, asparagine 625, asparagine 707, asparagine 763, asparagine 780, and asparagine 917.

Belongs to the glycosyl hydrolase 35 family. As to quaternary structure, monomer.

It localises to the secreted. The catalysed reaction is Hydrolysis of terminal non-reducing beta-D-galactose residues in beta-D-galactosides.. Functionally, cleaves beta-linked terminal galactosyl residues from gangliosides, glycoproteins, and glycosaminoglycans. Has high in vitro transglycosylation activity with p-nitrophenyl-beta-D-galactopyranoside, methyl-beta-D-galactopyranoside or lactose as a donor and galactose as an acceptor. The protein is Beta-galactosidase A (lacA) of Penicillium sp.